The following is a 226-amino-acid chain: 3-dehydroquinate dehydratase (226 aa).

Residues 33–35 (EWR) and arginine 65 each bind 3-dehydroquinate. Histidine 121 serves as the catalytic Proton donor/acceptor. Lysine 146 functions as the Schiff-base intermediate with substrate in the catalytic mechanism. Arginine 188, serine 207, and glutamine 211 together coordinate 3-dehydroquinate.

It belongs to the type-I 3-dehydroquinase family. In terms of assembly, homodimer.

It carries out the reaction 3-dehydroquinate = 3-dehydroshikimate + H2O. Its pathway is metabolic intermediate biosynthesis; chorismate biosynthesis; chorismate from D-erythrose 4-phosphate and phosphoenolpyruvate: step 3/7. Involved in the third step of the chorismate pathway, which leads to the biosynthesis of aromatic amino acids. Catalyzes the cis-dehydration of 3-dehydroquinate (DHQ) and introduces the first double bond of the aromatic ring to yield 3-dehydroshikimate. In Lactococcus lactis subsp. lactis (strain IL1403) (Streptococcus lactis), this protein is 3-dehydroquinate dehydratase.